Here is a 260-residue protein sequence, read N- to C-terminus: 3'-5' ssDNA/RNA exonuclease TatD (260 aa).

3 residues coordinate a divalent metal cation: Glu-91, His-127, and His-152.

Belongs to the metallo-dependent hydrolases superfamily. TatD-type hydrolase family. TatD subfamily. Monomer. The cofactor is Mg(2+).

It is found in the cytoplasm. Functionally, 3'-5' exonuclease that prefers single-stranded DNA and RNA. May play a role in the H(2)O(2)-induced DNA damage repair. This Citrobacter koseri (strain ATCC BAA-895 / CDC 4225-83 / SGSC4696) protein is 3'-5' ssDNA/RNA exonuclease TatD.